Here is a 432-residue protein sequence, read N- to C-terminus: Adenylosuccinate synthetase (432 aa).

Residues 13-19 and 41-43 contribute to the GTP site; these read GDEGKGK and GHT. D14 serves as the catalytic Proton acceptor. Mg(2+) is bound by residues D14 and G41. IMP contacts are provided by residues 14–17, 39–42, T130, R144, Q225, T240, and R304; these read DEGK and NAGH. Catalysis depends on H42, which acts as the Proton donor. 300-306 contacts substrate; it reads ATTGRKR. GTP-binding positions include R306, 332–334, and 415–417; these read KLD and STG.

It belongs to the adenylosuccinate synthetase family. As to quaternary structure, homodimer. The cofactor is Mg(2+).

The protein resides in the cytoplasm. The catalysed reaction is IMP + L-aspartate + GTP = N(6)-(1,2-dicarboxyethyl)-AMP + GDP + phosphate + 2 H(+). Its pathway is purine metabolism; AMP biosynthesis via de novo pathway; AMP from IMP: step 1/2. Functionally, plays an important role in the de novo pathway of purine nucleotide biosynthesis. Catalyzes the first committed step in the biosynthesis of AMP from IMP. In Vibrio cholerae serotype O1 (strain ATCC 39541 / Classical Ogawa 395 / O395), this protein is Adenylosuccinate synthetase.